Reading from the N-terminus, the 205-residue chain is Outer-membrane lipoprotein carrier protein (205 aa).

The signal sequence occupies residues 1–21 (MRFLAVATMVVALMVPWSVRA).

The protein belongs to the LolA family. Monomer.

The protein localises to the periplasm. In terms of biological role, participates in the translocation of lipoproteins from the inner membrane to the outer membrane. Only forms a complex with a lipoprotein if the residue after the N-terminal Cys is not an aspartate (The Asp acts as a targeting signal to indicate that the lipoprotein should stay in the inner membrane). The protein is Outer-membrane lipoprotein carrier protein of Methylobacillus flagellatus (strain ATCC 51484 / DSM 6875 / VKM B-1610 / KT).